The primary structure comprises 508 residues: Proline--tRNA ligase 2 (508 aa).

It belongs to the class-II aminoacyl-tRNA synthetase family. ProS type 3 subfamily. In terms of assembly, homodimer.

The protein resides in the cytoplasm. The enzyme catalyses tRNA(Pro) + L-proline + ATP = L-prolyl-tRNA(Pro) + AMP + diphosphate. Functionally, catalyzes the attachment of proline to tRNA(Pro) in a two-step reaction: proline is first activated by ATP to form Pro-AMP and then transferred to the acceptor end of tRNA(Pro). The chain is Proline--tRNA ligase 2 from Bacillus anthracis.